The following is a 160-amino-acid chain: Small ribosomal subunit protein uS9 (160 aa).

It belongs to the universal ribosomal protein uS9 family.

This Rhodopseudomonas palustris (strain ATCC BAA-98 / CGA009) protein is Small ribosomal subunit protein uS9.